Reading from the N-terminus, the 93-residue chain is Small ribosomal subunit protein uS19 (93 aa).

It belongs to the universal ribosomal protein uS19 family.

Protein S19 forms a complex with S13 that binds strongly to the 16S ribosomal RNA. This is Small ribosomal subunit protein uS19 from Geotalea uraniireducens (strain Rf4) (Geobacter uraniireducens).